A 642-amino-acid polypeptide reads, in one-letter code: Mini-chromosome maintenance complex-binding protein (642 aa).

Residues 151 to 161 (ARVSPSTSYTP) are compositionally biased toward polar residues. The segment at 151 to 188 (ARVSPSTSYTPSRHKRSYEDDEDMDLQPNKQKDQHMGA) is disordered. Serine 154 carries the phosphoserine modification. Residue threonine 160 is modified to Phosphothreonine. 2 positions are modified to phosphoserine: serine 167 and serine 298.

This sequence belongs to the MCMBP family. Interacts with the MCM complex: associates with the MCM3-7 complex which lacks MCM2, while it does not interact with the MCM complex when MCM2 is present (MCM2-7 complex). Interacts with the RPA complex, when composed of all RPA1, RPA2 and RPA3 components, but not with RPA1 or RPA2 alone.

It localises to the nucleus. Its function is as follows. Associated component of the MCM complex that acts as a regulator of DNA replication. Binds to the MCM complex during late S phase and promotes the disassembly of the MCM complex from chromatin, thereby acting as a key regulator of pre-replication complex (pre-RC) unloading from replicated DNA. Can dissociate the MCM complex without addition of ATP; probably acts by destabilizing interactions of each individual subunits of the MCM complex. Required for sister chromatid cohesion. This is Mini-chromosome maintenance complex-binding protein (MCMBP) from Bos taurus (Bovine).